Reading from the N-terminus, the 667-residue chain is Acetoacetyl-CoA synthetase (667 aa).

It belongs to the ATP-dependent AMP-binding enzyme family.

The protein localises to the cytoplasm. Its subcellular location is the cytosol. It catalyses the reaction acetoacetate + ATP + CoA = acetoacetyl-CoA + AMP + diphosphate. Converts acetoacetate to acetoacetyl-CoA in the cytosol. Ketone body-utilizing enzyme, responsible for the synthesis of cholesterol and fatty acids. This is Acetoacetyl-CoA synthetase (AACS) from Gallus gallus (Chicken).